We begin with the raw amino-acid sequence, 1490 residues long: DNA-directed RNA polymerase subunit beta' (1490 aa).

Zn(2+) is bound by residues cysteine 67, cysteine 69, cysteine 82, and cysteine 85. Positions 499, 501, and 503 each coordinate Mg(2+). Residues cysteine 868, cysteine 944, cysteine 951, and cysteine 954 each contribute to the Zn(2+) site.

This sequence belongs to the RNA polymerase beta' chain family. In terms of assembly, the RNAP catalytic core consists of 2 alpha, 1 beta, 1 beta' and 1 omega subunit. When a sigma factor is associated with the core the holoenzyme is formed, which can initiate transcription. Mg(2+) is required as a cofactor. It depends on Zn(2+) as a cofactor.

The catalysed reaction is RNA(n) + a ribonucleoside 5'-triphosphate = RNA(n+1) + diphosphate. Functionally, DNA-dependent RNA polymerase catalyzes the transcription of DNA into RNA using the four ribonucleoside triphosphates as substrates. The protein is DNA-directed RNA polymerase subunit beta' of Chlorobaculum tepidum (strain ATCC 49652 / DSM 12025 / NBRC 103806 / TLS) (Chlorobium tepidum).